A 234-amino-acid chain; its full sequence is Probable transcriptional regulatory protein MYCGA1330 (234 aa).

Belongs to the TACO1 family.

The protein resides in the cytoplasm. This chain is Probable transcriptional regulatory protein MYCGA1330, found in Mycoplasmoides gallisepticum (strain R(low / passage 15 / clone 2)) (Mycoplasma gallisepticum).